Here is a 297-residue protein sequence, read N- to C-terminus: MEESAPVESQGQLPSPHHGSLRRAVAAVLALDGESTLGRRKKRRKDSRPESIIIYRSDNEKTDEEPEESEGGDRPKEEEGEDFLDYPGDDGVWNMPLDSRYVTLTGTITRGKKKGQMVDIHVTLTEKELQELTKPKELSREAAPEGRRACQVGADQGPHVVLWTLVCLPVVFVLSFVVSFYYGTITWYNIFLVYNEERTFWHKISCCPCLILFYPVLIMTMASSLGLYAAVAQLSWSWAAWWRAACDMEKGFCGWLCSKLGLEDCSPYSIVELLESDNISGNLSNKDPIQEVETSTV.

The interval 1–88 is disordered; sequence MEESAPVESQ…EGEDFLDYPG (88 aa). At 1 to 159 the chain is on the extracellular side; that stretch reads MEESAPVESQ…CQVGADQGPH (159 aa). The span at 22-31 shows a compositional bias: low complexity; sequence RRAVAAVLAL. Composition is skewed to acidic residues over residues 61–70 and 78–88; these read KTDEEPEESE and EEGEDFLDYPG. A helical transmembrane segment spans residues 160–180; it reads VVLWTLVCLPVVFVLSFVVSF. The Cytoplasmic segment spans residues 181–210; sequence YYGTITWYNIFLVYNEERTFWHKISCCPCL. Residues 211-231 form a helical membrane-spanning segment; that stretch reads ILFYPVLIMTMASSLGLYAAV. Over 232-297 the chain is Extracellular; it reads AQLSWSWAAW…PIQEVETSTV (66 aa).

The protein localises to the membrane. In Mus musculus (Mouse), this protein is Transmembrane protein 169 (Tmem169).